The sequence spans 472 residues: Kynureninase 1 (472 aa).

Pyridoxal 5'-phosphate is bound by residues L146, T147, 174–177, S231, D260, H263, and Y285; that span reads FPSD. N6-(pyridoxal phosphate)lysine is present on K286. 2 residues coordinate pyridoxal 5'-phosphate: W326 and N354.

It belongs to the kynureninase family. In terms of assembly, homodimer. The cofactor is pyridoxal 5'-phosphate.

It is found in the cytoplasm. The enzyme catalyses L-kynurenine + H2O = anthranilate + L-alanine + H(+). The catalysed reaction is 3-hydroxy-L-kynurenine + H2O = 3-hydroxyanthranilate + L-alanine + H(+). Its pathway is amino-acid degradation; L-kynurenine degradation; L-alanine and anthranilate from L-kynurenine: step 1/1. It functions in the pathway cofactor biosynthesis; NAD(+) biosynthesis; quinolinate from L-kynurenine: step 2/3. Its function is as follows. Catalyzes the cleavage of L-kynurenine (L-Kyn) and L-3-hydroxykynurenine (L-3OHKyn) into anthranilic acid (AA) and 3-hydroxyanthranilic acid (3-OHAA), respectively. In Aspergillus niger (strain ATCC MYA-4892 / CBS 513.88 / FGSC A1513), this protein is Kynureninase 1 (bna5-1).